The primary structure comprises 188 residues: dCTP deaminase (188 aa).

DCTP is bound by residues 111–116 (KSTYAR), 135–137 (TLE), glutamine 156, tyrosine 170, and glutamine 180. Glutamate 137 acts as the Proton donor/acceptor in catalysis.

It belongs to the dCTP deaminase family. In terms of assembly, homotrimer.

It catalyses the reaction dCTP + H2O + H(+) = dUTP + NH4(+). It participates in pyrimidine metabolism; dUMP biosynthesis; dUMP from dCTP (dUTP route): step 1/2. Catalyzes the deamination of dCTP to dUTP. The polypeptide is dCTP deaminase (Cupriavidus necator (strain ATCC 17699 / DSM 428 / KCTC 22496 / NCIMB 10442 / H16 / Stanier 337) (Ralstonia eutropha)).